We begin with the raw amino-acid sequence, 419 residues long: Zinc finger protein Pegasus (419 aa).

Lys-5 participates in a covalent cross-link: Glycyl lysine isopeptide (Lys-Gly) (interchain with G-Cter in SUMO2). C2H2-type zinc fingers lie at residues 82–104, 110–132, and 138–161; these read LKCR…IRIH, HRCH…MRSH, and YKCE…RRKH. A Glycyl lysine isopeptide (Lys-Gly) (interchain with G-Cter in SUMO2) cross-link involves residue Lys-185. Polar residues-rich tracts occupy residues 223–236 and 262–273; these read QTDS…TTPT and LSSLPPENQNPA. Disordered regions lie at residues 223-247 and 262-356; these read QTDS…QELM and LSSL…PALP. Residues 290–311 show a composition bias toward low complexity; it reads QPSTQAVVSAVSASIPQSSSPT. Positions 332 to 349 are enriched in polar residues; the sequence is SEPSAHTSTPSIGNSQPS. C2H2-type zinc fingers lie at residues 364–386 and 392–416; these read HHCQ…MGCH and FQCN…RGQH.

The protein belongs to the Ikaros C2H2-type zinc-finger protein family. Self-associates. Interacts with other family members; IKZF1, IKZF2, IKZF3 and IKZF4. In terms of tissue distribution, expressed in brain, heart, skeletal muscle, kidney, and liver. Expressed in the hematopoietic cell lines MOLT-4, NALM-6 and K-562. Highly expressed in THP-1 and M-07e cell lines, which have characteristics of myeloid and early megakaryocytic cells respectively.

The protein localises to the nucleus. Functionally, transcriptional repressor that binds the core 5'GNNTGTNG-3' DNA consensus sequence. Involved in megakaryocyte differentiation. This chain is Zinc finger protein Pegasus (IKZF5), found in Homo sapiens (Human).